Here is a 219-residue protein sequence, read N- to C-terminus: 7-cyano-7-deazaguanine synthase (219 aa).

F10–L20 is a binding site for ATP. The Zn(2+) site is built by C188, C196, C199, and C202.

It belongs to the QueC family. The cofactor is Zn(2+).

It catalyses the reaction 7-carboxy-7-deazaguanine + NH4(+) + ATP = 7-cyano-7-deazaguanine + ADP + phosphate + H2O + H(+). The protein operates within purine metabolism; 7-cyano-7-deazaguanine biosynthesis. Catalyzes the ATP-dependent conversion of 7-carboxy-7-deazaguanine (CDG) to 7-cyano-7-deazaguanine (preQ(0)). This Neisseria gonorrhoeae (strain NCCP11945) protein is 7-cyano-7-deazaguanine synthase.